We begin with the raw amino-acid sequence, 229 residues long: Thymidylate kinase (229 aa).

9–16 (GPEGSGKS) is a binding site for ATP.

Belongs to the thymidylate kinase family.

The enzyme catalyses dTMP + ATP = dTDP + ADP. Its function is as follows. Phosphorylation of dTMP to form dTDP in both de novo and salvage pathways of dTTP synthesis. The polypeptide is Thymidylate kinase (Roseiflexus castenholzii (strain DSM 13941 / HLO8)).